Reading from the N-terminus, the 449-residue chain is tRNA-2-methylthio-N(6)-dimethylallyladenosine synthase (449 aa).

An MTTase N-terminal domain is found at 4 to 119 (RTFHIETFGC…APQALDRLVE (116 aa)). Positions 13, 48, 82, 158, 162, and 165 each coordinate [4Fe-4S] cluster. The 232-residue stretch at 144–375 (GAVPASVFVN…QTLQNRLTER (232 aa)) folds into the Radical SAM core domain. Residues 378–446 (QDMVGKKVEV…KHSLLAEQAG (69 aa)) enclose the TRAM domain.

It belongs to the methylthiotransferase family. MiaB subfamily. Monomer. [4Fe-4S] cluster serves as cofactor.

The protein localises to the cytoplasm. It carries out the reaction N(6)-dimethylallyladenosine(37) in tRNA + (sulfur carrier)-SH + AH2 + 2 S-adenosyl-L-methionine = 2-methylsulfanyl-N(6)-dimethylallyladenosine(37) in tRNA + (sulfur carrier)-H + 5'-deoxyadenosine + L-methionine + A + S-adenosyl-L-homocysteine + 2 H(+). Functionally, catalyzes the methylthiolation of N6-(dimethylallyl)adenosine (i(6)A), leading to the formation of 2-methylthio-N6-(dimethylallyl)adenosine (ms(2)i(6)A) at position 37 in tRNAs that read codons beginning with uridine. The chain is tRNA-2-methylthio-N(6)-dimethylallyladenosine synthase from Nitratidesulfovibrio vulgaris (strain DP4) (Desulfovibrio vulgaris).